We begin with the raw amino-acid sequence, 528 residues long: Bifunctional purine biosynthesis protein PurH (528 aa).

The MGS-like domain occupies 2–149 (TDLAPLRRAL…KNHGFVSVVV (148 aa)).

This sequence belongs to the PurH family.

The catalysed reaction is (6R)-10-formyltetrahydrofolate + 5-amino-1-(5-phospho-beta-D-ribosyl)imidazole-4-carboxamide = 5-formamido-1-(5-phospho-D-ribosyl)imidazole-4-carboxamide + (6S)-5,6,7,8-tetrahydrofolate. The enzyme catalyses IMP + H2O = 5-formamido-1-(5-phospho-D-ribosyl)imidazole-4-carboxamide. Its pathway is purine metabolism; IMP biosynthesis via de novo pathway; 5-formamido-1-(5-phospho-D-ribosyl)imidazole-4-carboxamide from 5-amino-1-(5-phospho-D-ribosyl)imidazole-4-carboxamide (10-formyl THF route): step 1/1. It functions in the pathway purine metabolism; IMP biosynthesis via de novo pathway; IMP from 5-formamido-1-(5-phospho-D-ribosyl)imidazole-4-carboxamide: step 1/1. This is Bifunctional purine biosynthesis protein PurH from Roseobacter denitrificans (strain ATCC 33942 / OCh 114) (Erythrobacter sp. (strain OCh 114)).